We begin with the raw amino-acid sequence, 253 residues long: Triosephosphate isomerase (253 aa).

Residue 9–11 (NWK) participates in substrate binding. Residue His97 is the Electrophile of the active site. Glu169 acts as the Proton acceptor in catalysis. Residues Gly175, Ser215, and 236–237 (GG) each bind substrate.

This sequence belongs to the triosephosphate isomerase family. Homodimer.

The protein localises to the cytoplasm. The catalysed reaction is D-glyceraldehyde 3-phosphate = dihydroxyacetone phosphate. It participates in carbohydrate biosynthesis; gluconeogenesis. Its pathway is carbohydrate degradation; glycolysis; D-glyceraldehyde 3-phosphate from glycerone phosphate: step 1/1. Functionally, involved in the gluconeogenesis. Catalyzes stereospecifically the conversion of dihydroxyacetone phosphate (DHAP) to D-glyceraldehyde-3-phosphate (G3P). The chain is Triosephosphate isomerase from Staphylococcus epidermidis (strain ATCC 35984 / DSM 28319 / BCRC 17069 / CCUG 31568 / BM 3577 / RP62A).